A 128-amino-acid chain; its full sequence is Fluoride-specific ion channel FluC (128 aa).

The next 4 membrane-spanning stretches (helical) occupy residues 5-25, 35-55, 67-87, and 96-116; these read IVAI…LSIG, LGTL…VVAF, LFVI…SVEV, and FGWA…LTGL. 2 residues coordinate Na(+): G75 and T78.

It belongs to the fluoride channel Fluc/FEX (TC 1.A.43) family.

The protein localises to the cell inner membrane. The enzyme catalyses fluoride(in) = fluoride(out). Na(+) is not transported, but it plays an essential structural role and its presence is essential for fluoride channel function. Fluoride-specific ion channel. Important for reducing fluoride concentration in the cell, thus reducing its toxicity. The chain is Fluoride-specific ion channel FluC from Burkholderia mallei (strain NCTC 10247).